We begin with the raw amino-acid sequence, 707 residues long: Polyribonucleotide nucleotidyltransferase (707 aa).

Asp486 and Asp492 together coordinate Mg(2+). One can recognise a KH domain in the interval 553–612; sequence PRIHIIKINPEKIKDVIGKGGSVIRMLTEETGTIIEIEDDGTVKISSTVKEKAKNAIRRI. Residues 622 to 690 enclose the S1 motif domain; sequence GRIYSGKVTR…RQGRLRLSIK (69 aa).

It belongs to the polyribonucleotide nucleotidyltransferase family. As to quaternary structure, component of the RNA degradosome, which is a multiprotein complex involved in RNA processing and mRNA degradation. It depends on Mg(2+) as a cofactor.

It localises to the cytoplasm. The catalysed reaction is RNA(n+1) + phosphate = RNA(n) + a ribonucleoside 5'-diphosphate. In terms of biological role, involved in mRNA degradation. Catalyzes the phosphorolysis of single-stranded polyribonucleotides processively in the 3'- to 5'-direction. The polypeptide is Polyribonucleotide nucleotidyltransferase (Buchnera aphidicola subsp. Acyrthosiphon pisum (strain 5A)).